Reading from the N-terminus, the 689-residue chain is Translation initiation factor IF-2 (689 aa).

The segment at 70-107 (VRSKKNSNKKKKKGKGNQDKRQENFAGKQQAQTVETPD) is disordered. Over residues 71–84 (RSKKNSNKKKKKGK) the composition is skewed to basic residues. The tr-type G domain maps to 191-360 (ERPAVVTIMG…LLVSEVEEYK (170 aa)). The interval 200-207 (GHVDHGKT) is G1. Position 200–207 (200–207 (GHVDHGKT)) interacts with GTP. The segment at 225 to 229 (GITQH) is G2. The G3 stretch occupies residues 246–249 (DTPG). GTP contacts are provided by residues 246–250 (DTPGH) and 300–303 (NKMD). Residues 300–303 (NKMD) form a G4 region. The segment at 336-338 (SAI) is G5.

The protein belongs to the TRAFAC class translation factor GTPase superfamily. Classic translation factor GTPase family. IF-2 subfamily.

It localises to the cytoplasm. Functionally, one of the essential components for the initiation of protein synthesis. Protects formylmethionyl-tRNA from spontaneous hydrolysis and promotes its binding to the 30S ribosomal subunits. Also involved in the hydrolysis of GTP during the formation of the 70S ribosomal complex. This is Translation initiation factor IF-2 from Bacillus cytotoxicus (strain DSM 22905 / CIP 110041 / 391-98 / NVH 391-98).